The following is a 79-amino-acid chain: Large ribosomal subunit protein bL28 (79 aa).

The disordered stretch occupies residues 1 to 26 (MAKVCQVTGKRPQSGNNVSHANKKTN). The segment covering 11–20 (RPQSGNNVSH) has biased composition (polar residues).

Belongs to the bacterial ribosomal protein bL28 family.

In Coxiella burnetii (strain CbuK_Q154) (Coxiella burnetii (strain Q154)), this protein is Large ribosomal subunit protein bL28.